Reading from the N-terminus, the 308-residue chain is Ornithine carbamoyltransferase (308 aa).

Residues 56 to 59 (STRT), glutamine 83, arginine 107, and 134 to 137 (HPCQ) each bind carbamoyl phosphate. Residues asparagine 165, aspartate 225, and 229-230 (SM) contribute to the L-ornithine site. Residues 266 to 267 (CL) and arginine 294 each bind carbamoyl phosphate.

The protein belongs to the aspartate/ornithine carbamoyltransferase superfamily. OTCase family.

The protein localises to the cytoplasm. It catalyses the reaction carbamoyl phosphate + L-ornithine = L-citrulline + phosphate + H(+). It functions in the pathway amino-acid biosynthesis; L-arginine biosynthesis; L-arginine from L-ornithine and carbamoyl phosphate: step 1/3. Functionally, reversibly catalyzes the transfer of the carbamoyl group from carbamoyl phosphate (CP) to the N(epsilon) atom of ornithine (ORN) to produce L-citrulline. The polypeptide is Ornithine carbamoyltransferase (Ruegeria pomeroyi (strain ATCC 700808 / DSM 15171 / DSS-3) (Silicibacter pomeroyi)).